The sequence spans 129 residues: Transcription antitermination protein NusB (129 aa).

The protein belongs to the NusB family.

In terms of biological role, involved in transcription antitermination. Required for transcription of ribosomal RNA (rRNA) genes. Binds specifically to the boxA antiterminator sequence of the ribosomal RNA (rrn) operons. In Staphylococcus epidermidis (strain ATCC 35984 / DSM 28319 / BCRC 17069 / CCUG 31568 / BM 3577 / RP62A), this protein is Transcription antitermination protein NusB.